Here is a 733-residue protein sequence, read N- to C-terminus: Catalase-peroxidase (733 aa).

Residues 1 to 24 (MTDDSTCPVTGGADKQVTGRGQSY) form a disordered region. The tryptophyl-tyrosyl-methioninium (Trp-Tyr) (with M-245) cross-link spans 96-219 (WHSAGTYRTL…LAAVQMGLIY (124 aa)). H97 serves as the catalytic Proton acceptor. Residues 219 to 245 (YVNPEGPNGKPDPVAAAKDIRETFARM) constitute a cross-link (tryptophyl-tyrosyl-methioninium (Tyr-Met) (with W-96)). H260 provides a ligand contact to heme b.

This sequence belongs to the peroxidase family. Peroxidase/catalase subfamily. As to quaternary structure, homodimer or homotetramer. Requires heme b as cofactor. Post-translationally, formation of the three residue Trp-Tyr-Met cross-link is important for the catalase, but not the peroxidase activity of the enzyme.

The catalysed reaction is H2O2 + AH2 = A + 2 H2O. It catalyses the reaction 2 H2O2 = O2 + 2 H2O. Its function is as follows. Bifunctional enzyme with both catalase and broad-spectrum peroxidase activity. This Methanoregula boonei (strain DSM 21154 / JCM 14090 / 6A8) protein is Catalase-peroxidase.